A 231-amino-acid polypeptide reads, in one-letter code: MTEANGTTGGGAGDPEVIDVRRGMFGAKGSGDTSGYGRLIRSVALPGGSPRPYGGHFDEVVDALAAALGQDLYDASVERIVVYRDELTLEIARARLPVVAKTLRDDAALRFELCLGVSGVHYPGDAGRELHAAYPLMSITHNRRIRLEVAAPDDDPHIPSLFSVYPTTDWHERETYDFFGIIFDGHPSLTRIEMPDDWVGHPQRKDYPLGGIPVEYHGARIPPPDERRAYN.

The protein belongs to the complex I 30 kDa subunit family. As to quaternary structure, NDH-1 is composed of 14 different subunits. Subunits NuoB, C, D, E, F, and G constitute the peripheral sector of the complex.

The protein localises to the cell membrane. It catalyses the reaction a quinone + NADH + 5 H(+)(in) = a quinol + NAD(+) + 4 H(+)(out). In terms of biological role, NDH-1 shuttles electrons from NADH, via FMN and iron-sulfur (Fe-S) centers, to quinones in the respiratory chain. The immediate electron acceptor for the enzyme in this species is believed to be a menaquinone. Couples the redox reaction to proton translocation (for every two electrons transferred, four hydrogen ions are translocated across the cytoplasmic membrane), and thus conserves the redox energy in a proton gradient. This is NADH-quinone oxidoreductase subunit C from Mycobacterium sp. (strain JLS).